We begin with the raw amino-acid sequence, 89 residues long: Small ribosomal subunit protein uS15 (89 aa).

The protein belongs to the universal ribosomal protein uS15 family. In terms of assembly, part of the 30S ribosomal subunit. Forms a bridge to the 50S subunit in the 70S ribosome, contacting the 23S rRNA.

One of the primary rRNA binding proteins, it binds directly to 16S rRNA where it helps nucleate assembly of the platform of the 30S subunit by binding and bridging several RNA helices of the 16S rRNA. In terms of biological role, forms an intersubunit bridge (bridge B4) with the 23S rRNA of the 50S subunit in the ribosome. The chain is Small ribosomal subunit protein uS15 from Streptococcus mutans serotype c (strain ATCC 700610 / UA159).